The chain runs to 39 residues: Omega-theraphotoxin-Ba1b (39 aa).

3 cysteine pairs are disulfide-bonded: Cys-4–Cys-17, Cys-8–Cys-31, and Cys-25–Cys-36.

The protein belongs to the neurotoxin 12 (Hwtx-2) family. 06 (TXP1) subfamily. Expressed by the venom gland.

The protein localises to the secreted. Its function is as follows. Inhibits voltage-gated calcium channels (Cav) in rat cerebellar granule cells. Has insecticidal activity to crickets (Acheta domesticus). Is not toxic to mice. This Brachypelma albiceps (Mexican golden redrump tarantula) protein is Omega-theraphotoxin-Ba1b.